We begin with the raw amino-acid sequence, 326 residues long: GTP 3',8-cyclase (326 aa).

Positions 6 to 220 (SFGRRINYLR…DRISASYELE (215 aa)) constitute a Radical SAM core domain. Arg15 is a GTP binding site. 2 residues coordinate [4Fe-4S] cluster: Cys22 and Cys26. Tyr28 serves as a coordination point for S-adenosyl-L-methionine. Cys29 provides a ligand contact to [4Fe-4S] cluster. Arg65 provides a ligand contact to GTP. Residue Gly69 participates in S-adenosyl-L-methionine binding. Thr96 provides a ligand contact to GTP. Residue Ser120 coordinates S-adenosyl-L-methionine. Lys157 provides a ligand contact to GTP. Met191 lines the S-adenosyl-L-methionine pocket. Positions 254 and 257 each coordinate [4Fe-4S] cluster. 259–261 (RVR) is a binding site for GTP. Cys271 contributes to the [4Fe-4S] cluster binding site.

It belongs to the radical SAM superfamily. MoaA family. In terms of assembly, monomer and homodimer. Requires [4Fe-4S] cluster as cofactor.

The enzyme catalyses GTP + AH2 + S-adenosyl-L-methionine = (8S)-3',8-cyclo-7,8-dihydroguanosine 5'-triphosphate + 5'-deoxyadenosine + L-methionine + A + H(+). Its pathway is cofactor biosynthesis; molybdopterin biosynthesis. Catalyzes the cyclization of GTP to (8S)-3',8-cyclo-7,8-dihydroguanosine 5'-triphosphate. The protein is GTP 3',8-cyclase of Geobacter sulfurreducens (strain ATCC 51573 / DSM 12127 / PCA).